A 510-amino-acid chain; its full sequence is Ribonuclease Y (510 aa).

The helical transmembrane segment at 2–22 (IYIIFSSIFAGFILGFLVRVF) threads the bilayer. Residues 198 to 258 (TVASVELPND…IRKELAKRTL (61 aa)) enclose the KH domain. One can recognise an HD domain in the interval 324-419 (VLSHSKETAI…VQIADAISAS (96 aa)).

This sequence belongs to the RNase Y family.

The protein resides in the cell membrane. Its function is as follows. Endoribonuclease that initiates mRNA decay. The polypeptide is Ribonuclease Y (Borrelia garinii subsp. bavariensis (strain ATCC BAA-2496 / DSM 23469 / PBi) (Borreliella bavariensis)).